The primary structure comprises 122 residues: uncharacterized protein (122 aa).

2 disordered regions span residues 1–30 (MGREMKKTGTPRPFRIEDPNQQPTWHDQPE) and 96–122 (FKSCLPPHFTEPSVSLSTSEGCEDAMG).

This is an uncharacterized protein from Homo sapiens (Human).